Reading from the N-terminus, the 155-residue chain is Ribosome maturation factor RimP (155 aa).

Belongs to the RimP family.

The protein localises to the cytoplasm. Required for maturation of 30S ribosomal subunits. The protein is Ribosome maturation factor RimP of Prochlorococcus marinus (strain MIT 9301).